The chain runs to 632 residues: 2-hydroxyacyl-CoA lyase 2 (632 aa).

A helical transmembrane segment spans residues 13 to 33; it reads LFPSFLLLACGTLVAALLGAA. Residue Glu98 coordinates thiamine diphosphate. Residues 470–550 are thiamine pyrophosphate binding; that stretch reads DFVGTAAHLV…VMALVGNDAG (81 aa). Mg(2+)-binding residues include Asp521 and Asn547.

Belongs to the TPP enzyme family. Mg(2+) is required as a cofactor. It depends on thiamine diphosphate as a cofactor. Expressed in all tissues tested, with highest expression in heart, pancreas and placenta.

It localises to the endoplasmic reticulum membrane. The catalysed reaction is 2-hydroxyoctadecanoyl-CoA = heptadecanal + formyl-CoA. It carries out the reaction (2R)-hydroxyhexadecanoyl-CoA = pentadecanal + formyl-CoA. Endoplasmic reticulum 2-OH acyl-CoA lyase involved in the cleavage (C1 removal) reaction in the fatty acid alpha-oxydation in a thiamine pyrophosphate (TPP)-dependent manner. Involved in the phytosphingosine degradation pathway. This Homo sapiens (Human) protein is 2-hydroxyacyl-CoA lyase 2.